The following is a 239-amino-acid chain: Protein NtpR (239 aa).

The Glutamine amidotransferase type-1 domain maps to 12–239 (LIRATDTFQG…GLFDFFVQEF (228 aa)). C113 (nucleophile) is an active-site residue. Active-site residues include H217 and E219.

The chain is Protein NtpR (ntpR) from Enterococcus hirae (strain ATCC 9790 / DSM 20160 / JCM 8729 / LMG 6399 / NBRC 3181 / NCIMB 6459 / NCDO 1258 / NCTC 12367 / WDCM 00089 / R).